The primary structure comprises 491 residues: PE-PGRS family protein PE_PGRS26 (491 aa).

Residues 1–93 (MSNVMVVPGM…VGSYAAAEAA (93 aa)) form the PE domain. 2 stretches are compositionally biased toward gly residues: residues 207–221 (NGGT…GGGL) and 229–238 (GGNGGGGDAG). Disordered stretches follow at residues 207–238 (NGGT…GDAG), 255–275 (DGGA…ARGG), and 444–491 (AGGN…GKHG). Positions 444-485 (AGGNGGDGGPSQGGGNPGFGGDGGTGGPGGVGVPDGIGGANG) are enriched in gly residues.

The protein belongs to the mycobacterial PE family. PGRS subfamily.

The protein localises to the cell surface. The sequence is that of PE-PGRS family protein PE_PGRS26 from Mycobacterium tuberculosis (strain ATCC 25618 / H37Rv).